A 505-amino-acid chain; its full sequence is Ikaros family zinc finger protein (505 aa).

4 C2H2-type zinc fingers span residues 18–40 (LTCE…KRSH), 46–68 (FQCN…VKLH), 74–96 (FKCS…IRTH), and 102–128 (YKCN…PGFH). Composition is skewed to polar residues over residues 262–273 (FLNTPSPVTRSA) and 309–327 (RFQH…SQQP). Disordered regions lie at residues 262–296 (FLNT…DIGS) and 309–440 (RFQH…VSGS). Over residues 336–345 (ILGGSLGGIC) the composition is skewed to gly residues. Residues 366–377 (ATSSPSNSCPDS) show a composition bias toward polar residues. The span at 393–406 (GSGSSTSRPNGSTG) shows a compositional bias: low complexity. Over residues 409 to 419 (HRPEMHQDNGR) the composition is skewed to basic and acidic residues. Residues 424 to 439 (SGASDSSSLPTYNVSG) show a composition bias toward polar residues. C2H2-type zinc fingers lie at residues 448-470 (YPCH…MGCH) and 476-500 (FECN…RGEH).

The protein belongs to the Ikaros C2H2-type zinc-finger protein family. As to quaternary structure, heterodimer and homodimer with other IKAROS family members. Expression is strongest in the blood, gills and intestine.

Its subcellular location is the nucleus. The polypeptide is Ikaros family zinc finger protein (Myxine glutinosa (Atlantic hagfish)).